The following is a 258-amino-acid chain: Phosphate import ATP-binding protein PstB (258 aa).

Positions 5 to 247 (LDLKDVNIYY…EKIFSNPTQK (243 aa)) constitute an ABC transporter domain. Residue 37–44 (GPSGCGKS) participates in ATP binding.

The protein belongs to the ABC transporter superfamily. Phosphate importer (TC 3.A.1.7) family. The complex is composed of two ATP-binding proteins (PstB), two transmembrane proteins (PstC and PstA) and a solute-binding protein (PstS).

The protein localises to the cell membrane. It catalyses the reaction phosphate(out) + ATP + H2O = ADP + 2 phosphate(in) + H(+). In terms of biological role, part of the ABC transporter complex PstSACB involved in phosphate import. Responsible for energy coupling to the transport system. The chain is Phosphate import ATP-binding protein PstB from Rhodococcus jostii (strain RHA1).